Here is a 247-residue protein sequence, read N- to C-terminus: 3-deoxy-manno-octulosonate cytidylyltransferase (247 aa).

The protein belongs to the KdsB family.

Its subcellular location is the cytoplasm. It carries out the reaction 3-deoxy-alpha-D-manno-oct-2-ulosonate + CTP = CMP-3-deoxy-beta-D-manno-octulosonate + diphosphate. The protein operates within nucleotide-sugar biosynthesis; CMP-3-deoxy-D-manno-octulosonate biosynthesis; CMP-3-deoxy-D-manno-octulosonate from 3-deoxy-D-manno-octulosonate and CTP: step 1/1. It participates in bacterial outer membrane biogenesis; lipopolysaccharide biosynthesis. Its function is as follows. Activates KDO (a required 8-carbon sugar) for incorporation into bacterial lipopolysaccharide in Gram-negative bacteria. This Pelodictyon phaeoclathratiforme (strain DSM 5477 / BU-1) protein is 3-deoxy-manno-octulosonate cytidylyltransferase.